Consider the following 457-residue polypeptide: Bifunctional protein GlmU (457 aa).

Residues 1–229 (MYNCAIILAA…YEEIMGVNSR (229 aa)) are pyrophosphorylase. UDP-N-acetyl-alpha-D-glucosamine contacts are provided by residues 8-11 (LAAG), lysine 22, glutamine 73, and 78-79 (GT). Residue aspartate 103 participates in Mg(2+) binding. Residues glycine 140, glutamate 155, asparagine 170, and asparagine 227 each coordinate UDP-N-acetyl-alpha-D-glucosamine. Asparagine 227 provides a ligand contact to Mg(2+). Positions 230 to 250 (VQLSEAEIVMRKRINHKHMVN) are linker. The tract at residues 251–457 (GVTFIDCEST…WLDKKGLLKK (207 aa)) is N-acetyltransferase. Positions 332 and 350 each coordinate UDP-N-acetyl-alpha-D-glucosamine. Histidine 362 (proton acceptor) is an active-site residue. The UDP-N-acetyl-alpha-D-glucosamine site is built by tyrosine 365 and asparagine 376. Residues 385–386 (NY), alanine 422, and arginine 439 each bind acetyl-CoA.

In the N-terminal section; belongs to the N-acetylglucosamine-1-phosphate uridyltransferase family. It in the C-terminal section; belongs to the transferase hexapeptide repeat family. As to quaternary structure, homotrimer. Mg(2+) serves as cofactor.

It is found in the cytoplasm. It carries out the reaction alpha-D-glucosamine 1-phosphate + acetyl-CoA = N-acetyl-alpha-D-glucosamine 1-phosphate + CoA + H(+). The catalysed reaction is N-acetyl-alpha-D-glucosamine 1-phosphate + UTP + H(+) = UDP-N-acetyl-alpha-D-glucosamine + diphosphate. The protein operates within nucleotide-sugar biosynthesis; UDP-N-acetyl-alpha-D-glucosamine biosynthesis; N-acetyl-alpha-D-glucosamine 1-phosphate from alpha-D-glucosamine 6-phosphate (route II): step 2/2. It functions in the pathway nucleotide-sugar biosynthesis; UDP-N-acetyl-alpha-D-glucosamine biosynthesis; UDP-N-acetyl-alpha-D-glucosamine from N-acetyl-alpha-D-glucosamine 1-phosphate: step 1/1. It participates in bacterial outer membrane biogenesis; LPS lipid A biosynthesis. Functionally, catalyzes the last two sequential reactions in the de novo biosynthetic pathway for UDP-N-acetylglucosamine (UDP-GlcNAc). The C-terminal domain catalyzes the transfer of acetyl group from acetyl coenzyme A to glucosamine-1-phosphate (GlcN-1-P) to produce N-acetylglucosamine-1-phosphate (GlcNAc-1-P), which is converted into UDP-GlcNAc by the transfer of uridine 5-monophosphate (from uridine 5-triphosphate), a reaction catalyzed by the N-terminal domain. In Clostridium botulinum (strain Langeland / NCTC 10281 / Type F), this protein is Bifunctional protein GlmU.